We begin with the raw amino-acid sequence, 257 residues long: Hydroxyacylglutathione hydrolase (257 aa).

Residues His-54, His-56, Asp-58, His-59, His-110, Asp-131, and His-169 each coordinate Zn(2+).

The protein belongs to the metallo-beta-lactamase superfamily. Glyoxalase II family. Monomer. Zn(2+) is required as a cofactor.

It catalyses the reaction an S-(2-hydroxyacyl)glutathione + H2O = a 2-hydroxy carboxylate + glutathione + H(+). It participates in secondary metabolite metabolism; methylglyoxal degradation; (R)-lactate from methylglyoxal: step 2/2. Functionally, thiolesterase that catalyzes the hydrolysis of S-D-lactoyl-glutathione to form glutathione and D-lactic acid. This chain is Hydroxyacylglutathione hydrolase, found in Hahella chejuensis (strain KCTC 2396).